A 236-amino-acid chain; its full sequence is RNA-binding protein 24 (236 aa).

The RRM domain occupies 11-88 (TKIFVGGLPY…RKANVNLAYL (78 aa)). Residues 175 to 199 (QYPYAASPAAAGYVTTGGYSYAVQQ) form a necessary for interaction with EIF4E region.

As to quaternary structure, interacts with EIF4E; this interaction prevents EIF4E from binding to p53/TP53 mRNA and inhibits the assembly of translation initiation complex. In terms of tissue distribution, expressed strongly in heart and skeletal muscles. Weakly expressed in intestine, aorta, liver, lung, kidney, uterus and bladder.

The protein localises to the nucleus. It localises to the cytoplasm. In terms of biological role, multifunctional RNA-binding protein involved in the regulation of pre-mRNA splicing, mRNA stability and mRNA translation important for cell fate decision and differentiation. Plays a major role in pre-mRNA alternative splicing regulation. Mediates preferentially muscle-specific exon inclusion in numerous mRNAs important for striated cardiac and skeletal muscle cell differentiation. Binds to intronic splicing enhancer (ISE) composed of stretches of GU-rich motifs localized in flanking intron of exon that will be included by alternative splicing. Involved in embryonic stem cell (ESC) transition to cardiac cell differentiation by promoting pre-mRNA alternative splicing events of several pluripotency and/or differentiation genes. Plays a role in the regulation of mRNA stability. Binds to 3'-untranslated region (UTR) AU-rich elements in target transcripts, such as CDKN1A and MYOG, leading to maintain their stabilities. Involved in myogenic differentiation by regulating MYOG levels. Binds to multiple regions in the mRNA 3'-UTR of TP63, hence inducing its destabilization. Also promotes the destabilization of the CHRM2 mRNA via its binding to a region in the coding sequence. Plays a role in the regulation of mRNA translation. Mediates repression of p53/TP53 mRNA translation through its binding to U-rich element in the 3'-UTR, hence preventing EIF4E from binding to p53/TP53 mRNA and translation initiation. Binds to a huge amount of mRNAs. Required for embryonic heart development, sarcomer and M-band formation in striated muscles. Together with RBM20, promotes the expression of short isoforms of PDLIM5/ENH in cardiomyocytes. The sequence is that of RNA-binding protein 24 from Mus musculus (Mouse).